The sequence spans 492 residues: Probable beta-1,4-xylosyltransferase IRX14H (492 aa).

Residues 1 to 33 lie on the Cytoplasmic side of the membrane; it reads MKLSVFRLSYWNRRGSSFRSSPSLDPSFDGKSP. A helical; Signal-anchor for type II membrane protein transmembrane segment spans residues 34–54; that stretch reads SSVFWFVIHGLCCLISLILGF. Residues 55–492 are Lumenal-facing; the sequence is RFSHLVLFFL…FDGVKVSATS (438 aa). N-linked (GlcNAc...) asparagine glycosylation is found at asparagine 99, asparagine 196, and asparagine 314. A disordered region spans residues 457-492; it reads IKEAKSNSKPRVSKSKSYKEKQEPKAFDGVKVSATS. Positions 473–484 are enriched in basic and acidic residues; that stretch reads SYKEKQEPKAFD.

The protein belongs to the glycosyltransferase 43 family. In terms of tissue distribution, expressed in developing interfascicular fibers and xylem cells in stems and developing secondary xylem in roots.

It is found in the golgi apparatus membrane. Its function is as follows. Involved in the synthesis of the hemicellulose glucuronoxylan, a major component of secondary cell walls. Probably involved in the elongation of glucuronoxylan xylosyl backbone. The chain is Probable beta-1,4-xylosyltransferase IRX14H (IRX14H) from Arabidopsis thaliana (Mouse-ear cress).